We begin with the raw amino-acid sequence, 2178 residues long: Toxin A (2178 aa).

Residues 1–93 form a four-helical bundle region; sequence MLITREQLMK…RELIKNSRTS (93 aa). The 377-residue stretch at 98–474 folds into the GT44 domain; the sequence is KNLSFIWIGG…KPEVNSTVFF (377 aa). The segment at 98 to 474 is glucosyltransferase region; sequence KNLSFIWIGG…KPEVNSTVFF (377 aa). The segment at 98 to 474 is N-acetylglucosaminyltransferase region; the sequence is KNLSFIWIGG…KPEVNSTVFF (377 aa). UDP-N-acetyl-alpha-D-glucosamine contacts are provided by residues 103–105, Asn141, 267–271, and 284–286; these read IWI, SDILR, and DLD. Positions 284, 286, and 520 each coordinate Mg(2+). 523-525 is a binding site for UDP-N-acetyl-alpha-D-glucosamine; the sequence is SSW. An autoprocessing region region spans residues 549-806; the sequence is NYEDGLNFNK…RVEQLNKVAE (258 aa). The 1D-myo-inositol hexakisphosphate site is built by Asn557, Lys607, and Lys651. The Peptidase C80 domain occupies 574 to 787; it reads VNSTKIYENY…QISNKYVVYW (214 aa). The active-site For protease activity is His657. The active-site Nucleophile; for protease activity is the Cys707. 1D-myo-inositol hexakisphosphate contacts are provided by residues 758-759 and Lys782; that span reads KR. The segment at 807 to 1485 is translocation region; it reads FAKDINSIIQ…VYMEGKIFLN (679 aa). Cell wall-binding repeat units lie at residues 1799–1818, 1820–1839, 1870–1889, 1890–1909, 1910–1929, 1931–1950, 1951–1970, 2004–2023, 2024–2043, 2045–2060, 2064–2083, 2114–2133, 2134–2153, and 2155–2174; these read EYGW…INLI, KKGY…NTGV, YTGW…NSKA, VTGL…NGQM, QIKW…NTGE, IIGW…EGRL, LTGY…NING, YKGW…DSIA, VTGS…KTAV, TNGW…YVSN, VLGY…STGI, YTGW…YNSA, VTGW…KTGA, and TTGL…KGEQ.

It belongs to the clostridial glucosylating toxin (LCGT) family. Mn(2+) serves as cofactor. It depends on Mg(2+) as a cofactor. In terms of processing, undergoes autocatalytic cleavage to release the N-terminal part (N-acetylglucosaminyltransferase TcdA), which constitutes the active part of the toxin, in the host cytosol. 1D-myo-inositol hexakisphosphate-binding (InsP6) activates the peptidase C80 domain and promotes autoprocessing.

It is found in the secreted. Its subcellular location is the host endosome membrane. The protein resides in the host cytoplasm. The protein localises to the host cytosol. It localises to the host cell membrane. It carries out the reaction L-threonyl-[protein] + UDP-N-acetyl-alpha-D-glucosamine = 3-O-(N-acetyl-alpha-D-glucosaminyl)-L-threonyl-[protein] + UDP + H(+). Its activity is regulated as follows. Protease activity is activated upon binding to 1D-myo-inositol hexakisphosphate (InsP6), which induces conformational reorganization. Its function is as follows. Precursor of a cytotoxin, which enters into host cells and mediates autoprocessing to release the active toxin (N-acetylglucosaminyltransferase TcdA) into the host cytosol. Once entered into host cells, acidification in the endosome promotes the membrane insertion of the translocation region and formation of a pore, leading to translocation of the GT44 and peptidase C80 domains across the endosomal membrane. This activates the peptidase C80 domain and autocatalytic processing, releasing the N-terminal part (N-acetylglucosaminyltransferase TcdA), which constitutes the active part of the toxin, in the cytosol. In terms of biological role, active form of the toxin, which is released into the host cytosol following autoprocessing and inactivates small GTPases. Acts by mediating monoglycosylation of small GTPases of the Rho family (Rac1, RhoA, RhoG and Cdc42) in host cells at the conserved threonine residue located in the switch I region ('Thr-37/35'), using UDP-N-acetyl-alpha-D-glucosamine as the sugar donor. Monoglycosylation of host small GTPases completely prevents the recognition of the downstream effector, blocking the GTPases in their inactive form, leading to actin cytoskeleton disruption and cell death. This is Toxin A (tcdA) from Clostridium novyi.